Here is a 573-residue protein sequence, read N- to C-terminus: MRASELLAPTLRETPAEAEIVSHQLLLRGGFIRKAAAGIYTYLPLGRRVLAKIEQIIREEMDRAGGQEVVLPIIQPAELWQESGRWEVYGEEMFRLQDRHRRQFCLGPTHEEIITALVRSEVTSYKQLPLLLYQIQNKYRDERRPRFGLLRGREFIMKDLYSFDLDQEGLNQSYRKMYQAYSNVFRRCGLDFRPVQADSGAIGGNYSHEFMALATAGEALLVYCRECDYAANVEIAVAKALPMIATENPAPLKEVATPGQKTVAEICTFLEVTPDRLIKTLFYEADGQLIAALVRGDRELNEVKLQNHLGCRHLLLADPERVRKATGAPVGFVGPVGLQGIPLYADLEIPYLVNGVAGANREGYHLVNVNPGRDFNPTAVVDIRQVEAGEPCPQCGAPLAQARGIEVGQVFQLGTKYSGALGANYTDARGQEHPIVMGCYGIGVSRTMAAIVEQCHDDQGIIWPLSVAPYQVVIIPASLKDDGQRQVAEGLYRELAAAGVEVVYDDRDERAGLKFVEADLIGYPLRITVGKRTITSGTVDVKWRSRKEETPLPLEGLSAQIQALLAREMEKYR.

Belongs to the class-II aminoacyl-tRNA synthetase family. ProS type 1 subfamily. As to quaternary structure, homodimer.

The protein resides in the cytoplasm. It carries out the reaction tRNA(Pro) + L-proline + ATP = L-prolyl-tRNA(Pro) + AMP + diphosphate. In terms of biological role, catalyzes the attachment of proline to tRNA(Pro) in a two-step reaction: proline is first activated by ATP to form Pro-AMP and then transferred to the acceptor end of tRNA(Pro). As ProRS can inadvertently accommodate and process non-cognate amino acids such as alanine and cysteine, to avoid such errors it has two additional distinct editing activities against alanine. One activity is designated as 'pretransfer' editing and involves the tRNA(Pro)-independent hydrolysis of activated Ala-AMP. The other activity is designated 'posttransfer' editing and involves deacylation of mischarged Ala-tRNA(Pro). The misacylated Cys-tRNA(Pro) is not edited by ProRS. This chain is Proline--tRNA ligase, found in Moorella thermoacetica (strain ATCC 39073 / JCM 9320).